A 471-amino-acid chain; its full sequence is ATP synthase subunit beta, chloroplastic (471 aa).

151-158 (GGAGVGKT) lines the ATP pocket.

The protein belongs to the ATPase alpha/beta chains family. F-type ATPases have 2 components, CF(1) - the catalytic core - and CF(0) - the membrane proton channel. CF(1) has five subunits: alpha(3), beta(3), gamma(1), delta(1), epsilon(1). CF(0) has four main subunits: a(1), b(1), b'(1) and c(9-12).

The protein resides in the plastid. Its subcellular location is the chloroplast thylakoid membrane. It catalyses the reaction ATP + H2O + 4 H(+)(in) = ADP + phosphate + 5 H(+)(out). In terms of biological role, produces ATP from ADP in the presence of a proton gradient across the membrane. The catalytic sites are hosted primarily by the beta subunits. This chain is ATP synthase subunit beta, chloroplastic, found in Rhodomonas salina (Cryptomonas salina).